Here is a 675-residue protein sequence, read N- to C-terminus: Pescadillo homolog (675 aa).

The segment at 309–331 (AGLDEAKEEPAAETTEESSETID) is disordered. Positions 352–471 (EAGSLFAPFT…RLVRPDLYAP (120 aa)) constitute a BRCT domain. The segment at 475-675 (LPPHLSPWVK…RRKLEKGAAK (201 aa)) is disordered. The span at 498 to 518 (EQEEEGEAELDEDSDEEMEEA) shows a compositional bias: acidic residues. Residues 519–530 (TSDKKAEAKADV) show a composition bias toward basic and acidic residues. Acidic residues-rich tracts occupy residues 532–541 (SESEDEDESV) and 549–580 (GTDDDESESEDEEEDFDGFEEEAASESEDEEE). Residues 551-675 (DDDESESEDE…RRKLEKGAAK (125 aa)) adopt a coiled-coil conformation. The span at 581–591 (AARTQHQKELE) shows a compositional bias: basic and acidic residues. Basic residues predominate over residues 611-623 (KKASQAKKIAAKK). Positions 624-634 (RKEEEELERQK) are enriched in basic and acidic residues.

It belongs to the pescadillo family. Component of the NOP7 complex, composed of erb1, nop7 and ytm1. The complex is held together by erb1, which interacts with nop7 via its N-terminal domain and with ytm1 via a high-affinity interaction between the seven-bladed beta-propeller domains of the 2 proteins. The NOP7 complex associates with the 66S pre-ribosome.

The protein resides in the nucleus. It is found in the nucleolus. It localises to the nucleoplasm. Component of the NOP7 complex, which is required for maturation of the 25S and 5.8S ribosomal RNAs and formation of the 60S ribosome. This chain is Pescadillo homolog (nop7), found in Aspergillus fumigatus (strain CBS 144.89 / FGSC A1163 / CEA10) (Neosartorya fumigata).